We begin with the raw amino-acid sequence, 141 residues long: Granulocyte-macrophage colony-stimulating factor (141 aa).

Positions 1 to 17 are cleaved as a signal peptide; it reads MWLQNLLFLGIVVYSLS. O-linked (GalNAc...) serine glycosylation occurs at Ser-22. The O-linked (GalNAc...) threonine glycan is linked to Thr-27. 2 disulfide bridges follow: Cys-68-Cys-110 and Cys-102-Cys-135. Asn-83 and Asn-92 each carry an N-linked (GlcNAc...) asparagine glycan.

The protein belongs to the GM-CSF family. In terms of assembly, monomer. The signaling GM-CSF receptor complex is a dodecamer of two head-to-head hexamers of two alpha, two beta, and two ligand subunits.

It localises to the secreted. Its function is as follows. Cytokine that stimulates the growth and differentiation of hematopoietic precursor cells from various lineages, including granulocytes, macrophages, eosinophils and erythrocytes. The sequence is that of Granulocyte-macrophage colony-stimulating factor (Csf2) from Mus musculus (Mouse).